Here is a 77-residue protein sequence, read N- to C-terminus: SS18-like protein 2 (77 aa).

The short motif at 50-53 (YQHV) is the SH2-binding element.

It belongs to the SS18 family.

This chain is SS18-like protein 2 (SS18L2), found in Homo sapiens (Human).